A 493-amino-acid polypeptide reads, in one-letter code: Transcript termination protein A18 (493 aa).

Residues 100 to 256 enclose the Helicase ATP-binding domain; sequence MIELKRPLYI…NSIINIAKLS (157 aa). 113-120 contributes to the ATP binding site; that stretch reads LACGFGKT. A DESH box motif is present at residues 206 to 209; it reads DESH. One can recognise a Helicase C-terminal domain in the interval 309-456; sequence ILDTLVEEFK…IISLSVDKLG (148 aa).

The protein belongs to the helicase family. Poxviruses subfamily. As to quaternary structure, interacts with G2. Might be part of a transcription complex composed at least of G2, A18, and H5.

The protein resides in the virion. DNA helicase which seems to act as a postreplicative transcription termination factor. Involved in ATP-dependent release of nascent RNA. Forms a stable complex with single-stranded DNA, and to a lesser extent RNA. The chain is Transcript termination protein A18 from Mus musculus (Mouse).